The sequence spans 208 residues: Attacin-A (208 aa).

The N-terminal stretch at 1–20 is a signal peptide; that stretch reads MQSFKICFFISCLSVVLVKG. The propeptide occupies 21-47; the sequence is QFGGTVSSNPNGGLDVNARLSKTIGDP.

As to expression, hemolymph and fat body.

The protein resides in the secreted. In terms of biological role, hemolymph antibacterial protein against Gram-negative bacteria. In Glossina morsitans morsitans (Savannah tsetse fly), this protein is Attacin-A.